A 146-amino-acid chain; its full sequence is Catabolic 3-dehydroquinase (146 aa).

Tyr24 functions as the Proton acceptor in the catalytic mechanism. Substrate is bound by residues Asn78, His84, and Asp91. The active-site Proton donor is His104. Residues 105–106 and Arg115 contribute to the substrate site; that span reads IT.

This sequence belongs to the type-II 3-dehydroquinase family. Homododecamer. Adopts a ring-like structure, composed of an arrangement of two hexameric rings stacked on top of one another.

The catalysed reaction is 3-dehydroquinate = 3-dehydroshikimate + H2O. It functions in the pathway aromatic compound metabolism; 3,4-dihydroxybenzoate biosynthesis; 3,4-dihydroxybenzoate from 3-dehydroquinate: step 1/2. Its function is as follows. Is involved in the catabolism of quinate. Allows the utilization of quinate as carbon source via the beta-ketoadipate pathway. The polypeptide is Catabolic 3-dehydroquinase (Candida dubliniensis (strain CD36 / ATCC MYA-646 / CBS 7987 / NCPF 3949 / NRRL Y-17841) (Yeast)).